Consider the following 538-residue polypeptide: Probable cytochrome P450 309a2 (538 aa).

Residue Cys483 coordinates heme.

This sequence belongs to the cytochrome P450 family. Requires heme as cofactor.

Its subcellular location is the endoplasmic reticulum membrane. The protein resides in the microsome membrane. In terms of biological role, may be involved in the metabolism of insect hormones and in the breakdown of synthetic insecticides. The sequence is that of Probable cytochrome P450 309a2 (Cyp309a2) from Drosophila melanogaster (Fruit fly).